Consider the following 536-residue polypeptide: SNW domain-containing protein 1 (536 aa).

Positions 1-46 (MALTSFLPAPTQLSQDQLEAEEKARSQRSRQTSLVSSRREPPPYGY) are disordered. The residue at position 2 (A2) is an N-acetylalanine. S14 is modified (phosphoserine). A Glycyl lysine isopeptide (Lys-Gly) (interchain with G-Cter in SUMO2) cross-link involves residue K23. An interaction with PPIL1 region spans residues 59 to 79 (GDGGAFPEIHVAQYPLDMGRK). Residues K81, K97, K115, K122, K141, K158, and K170 each participate in a glycyl lysine isopeptide (Lys-Gly) (interchain with G-Cter in SUMO2) cross-link. The tract at residues 174–339 (AQYIRYTPSQ…KARERRAGIK (166 aa)) is SNW. S182 and S190 each carry phosphoserine. K193 participates in a covalent cross-link: Glycyl lysine isopeptide (Lys-Gly) (interchain with G-Cter in SUMO2). The segment at 209–233 (PPRFKINKKIPRGPPSPPAPVMHSP) is disordered. A phosphoserine mark is found at S224, S232, and S234. Glycyl lysine isopeptide (Lys-Gly) (interchain with G-Cter in SUMO2) cross-links involve residues K240, K258, K286, K339, K344, K416, and K441. The tract at residues 311-386 (KMAQKEKEKH…RSKLQRNENR (76 aa)) is disordered. The residue at position 446 (S446) is a Phosphoserine. A Glycyl lysine isopeptide (Lys-Gly) (interchain with G-Cter in SUMO2) cross-link involves residue K452. Basic and acidic residues-rich tracts occupy residues 470–489 (NRFV…RGRE) and 503–530 (KFLE…EHEG). A disordered region spans residues 470–536 (NRFVPDKEFS…EHEGKKRRKE (67 aa)). Residues S479 and S481 each carry the phosphoserine modification. Residue K509 forms a Glycyl lysine isopeptide (Lys-Gly) (interchain with G-Cter in SUMO2) linkage.

It belongs to the SNW family. Identified in the spliceosome C complex. Associates with U4/U6-U5 tri-small nuclear ribonucleoproteins (U4/U6-U5 tri-snRNPs). Component of the minor spliceosome, which splices U12-type introns. Interacts with SKI, SMAD2,SMAD3, RBPJ, RB1, PABPN1, MAGEA1, SIRT1, FOXN3, U2AF2, DAXX and ATP1B4. Interacts with PPIL1. Interacts with VDR and RXRA; preferentially associates with VDR:RXRA heterodimers. Interacts with NCOR2. Interacts with MAML1. Interacts with NOTCH1 NICD; the interaction involves multimerized NOTCH1 NICD. Forms a complex with NOTCH1 NICD and MAML1; the association is dissociated by RBPJ. Associates with positive transcription elongation factor b (P-TEFb). Component of the SNARP complex which consists at least of SNIP1, SNW1, THRAP3, BCLAF1 and PNN. In terms of assembly, (Microbial infection) Interacts with human papillomavirus type-16 (HPV16) E7 protein. As to quaternary structure, (Microbial infection) Interacts with EBV EBNA2; EBNA2 competes with NCOR2 for interaction with SNW1.

It localises to the nucleus. Its function is as follows. Involved in pre-mRNA splicing as component of the spliceosome. As a component of the minor spliceosome, involved in the splicing of U12-type introns in pre-mRNAs. Required for the specific splicing of CDKN1A pre-mRNA; the function probably involves the recruitment of U2AF2 to the mRNA. May recruit PPIL1 to the spliceosome. May be involved in cyclin-D1/CCND1 mRNA stability through the SNARP complex which associates with both the 3'end of the CCND1 gene and its mRNA. Involved in transcriptional regulation. Modulates TGF-beta-mediated transcription via association with SMAD proteins, MYOD1-mediated transcription via association with PABPN1, RB1-mediated transcriptional repression, and retinoid-X receptor (RXR)- and vitamin D receptor (VDR)-dependent gene transcription in a cell line-specific manner probably involving coactivators NCOA1 and GRIP1. Is involved in NOTCH1-mediated transcriptional activation. Binds to multimerized forms of Notch intracellular domain (NICD) and is proposed to recruit transcriptional coactivators such as MAML1 to form an intermediate preactivation complex which associates with DNA-bound CBF-1/RBPJ to form a transcriptional activation complex by releasing SNW1 and redundant NOTCH1 NICD. In terms of biological role, (Microbial infection) Is recruited by HIV-1 Tat to Tat:P-TEFb:TAR RNA complexes and is involved in Tat transcription by recruitment of MYC, MEN1 and TRRAP to the HIV promoter. Functionally, (Microbial infection) Proposed to be involved in transcriptional activation by EBV EBNA2 of CBF-1/RBPJ-repressed promoters. This chain is SNW domain-containing protein 1 (SNW1), found in Homo sapiens (Human).